The sequence spans 231 residues: Enolase-phosphatase E1 (231 aa).

Belongs to the HAD-like hydrolase superfamily. MasA/MtnC family. As to quaternary structure, monomer. It depends on Mg(2+) as a cofactor.

It catalyses the reaction 5-methylsulfanyl-2,3-dioxopentyl phosphate + H2O = 1,2-dihydroxy-5-(methylsulfanyl)pent-1-en-3-one + phosphate. Its pathway is amino-acid biosynthesis; L-methionine biosynthesis via salvage pathway; L-methionine from S-methyl-5-thio-alpha-D-ribose 1-phosphate: step 3/6. It functions in the pathway amino-acid biosynthesis; L-methionine biosynthesis via salvage pathway; L-methionine from S-methyl-5-thio-alpha-D-ribose 1-phosphate: step 4/6. Its function is as follows. Bifunctional enzyme that catalyzes the enolization of 2,3-diketo-5-methylthiopentyl-1-phosphate (DK-MTP-1-P) into the intermediate 2-hydroxy-3-keto-5-methylthiopentenyl-1-phosphate (HK-MTPenyl-1-P), which is then dephosphorylated to form the acireductone 1,2-dihydroxy-3-keto-5-methylthiopentene (DHK-MTPene). In Stenotrophomonas maltophilia (strain R551-3), this protein is Enolase-phosphatase E1.